The following is a 151-amino-acid chain: Neuroglobin (151 aa).

The 149-residue stretch at 1 to 149 folds into the Globin domain; it reads MERPEPELIR…VVQAMSRGWD (149 aa). A disulfide bridge links cysteine 46 with cysteine 55. Histidine 64 and histidine 96 together coordinate heme b.

It belongs to the globin family. As to quaternary structure, monomer. Homodimer and homotetramer; disulfide-linked. Mainly monomeric but also detected as part of homodimers and homotetramers. Interacts with 14-3-3 proteins; regulates the phosphorylation of NGB. Could interact (ferrous form) with G-alpha(i) proteins (GTP-bound form). Post-translationally, phosphorylated during hypoxia by ERK1/ERK2. Phosphorylation regulates the heme pocket hexacoordination preventing the association of His-64 with the heme metal center. Thereby, promotes the access of dioxygen and nitrite to the heme and stimulates the nitrite reductase activity. Phosphorylation during hypoxia is stabilized by 14-3-3 proteins. In terms of processing, an intramolecular Cys-46/Cys-55 disulfide bond, not necessarily present in orthologs, regulates the heme pocket hexacoordination preventing the association of His-64 with the heme metal center. Thereby, promotes the access of dioxygen and nitrite to the heme and stimulates the nitrite reductase activity. As to expression, predominantly expressed in brain, the strongest expression is seen in the frontal lobe, the subthalamic nucleus and the thalamus.

Its subcellular location is the cytoplasm. The protein resides in the cytosol. It is found in the mitochondrion matrix. It carries out the reaction Fe(III)-heme b-[protein] + nitric oxide + H2O = Fe(II)-heme b-[protein] + nitrite + 2 H(+). Monomeric globin with a bis-histidyl six-coordinate heme-iron atom through which it can bind dioxygen, carbon monoxide and nitric oxide. Could help transport oxygen and increase its availability to the metabolically active neuronal tissues, though its low quantity in tissues as well as its high affinity for dioxygen, which may limit its oxygen-releasing ability, argue against it. The ferrous/deoxygenated form exhibits a nitrite reductase activity and it could produce nitric oxide which in turn inhibits cellular respiration in response to hypoxia. In its ferrous/deoxygenated state, it may also exhibit GDI (Guanine nucleotide Dissociation Inhibitor) activity toward heterotrimeric G-alpha proteins, thereby regulating signal transduction to facilitate neuroprotective responses in the wake of hypoxia and associated oxidative stress. In Homo sapiens (Human), this protein is Neuroglobin.